We begin with the raw amino-acid sequence, 454 residues long: tRNA modification GTPase MnmE (454 aa).

(6S)-5-formyl-5,6,7,8-tetrahydrofolate contacts are provided by Arg-23, Glu-80, and Lys-120. One can recognise a TrmE-type G domain in the interval Gly-216 to Gly-377. Residue Asn-226 coordinates K(+). GTP-binding positions include Asn-226 to Ser-231, Thr-245 to Thr-251, Asp-270 to Gly-273, Asn-335 to Asp-338, and Ser-358 to Arg-360. Ser-230 serves as a coordination point for Mg(2+). Thr-245, Ile-247, and Thr-250 together coordinate K(+). Thr-251 serves as a coordination point for Mg(2+). Lys-454 is a (6S)-5-formyl-5,6,7,8-tetrahydrofolate binding site.

This sequence belongs to the TRAFAC class TrmE-Era-EngA-EngB-Septin-like GTPase superfamily. TrmE GTPase family. Homodimer. Heterotetramer of two MnmE and two MnmG subunits. It depends on K(+) as a cofactor.

The protein localises to the cytoplasm. In terms of biological role, exhibits a very high intrinsic GTPase hydrolysis rate. Involved in the addition of a carboxymethylaminomethyl (cmnm) group at the wobble position (U34) of certain tRNAs, forming tRNA-cmnm(5)s(2)U34. This Yersinia enterocolitica serotype O:8 / biotype 1B (strain NCTC 13174 / 8081) protein is tRNA modification GTPase MnmE.